We begin with the raw amino-acid sequence, 115 residues long: Large ribosomal subunit protein bL20c (115 aa).

It belongs to the bacterial ribosomal protein bL20 family.

Its subcellular location is the plastid. It is found in the chloroplast. Binds directly to 23S ribosomal RNA and is necessary for the in vitro assembly process of the 50S ribosomal subunit. It is not involved in the protein synthesizing functions of that subunit. In Chlorokybus atmophyticus (Soil alga), this protein is Large ribosomal subunit protein bL20c.